The following is a 607-amino-acid chain: Elongation factor 4 (607 aa).

The 183-residue stretch at 11-193 folds into the tr-type G domain; that stretch reads SRIRNFSIIA…QVVEKVPAPA (183 aa). GTP is bound by residues 23–28 and 140–143; these read DHGKST and NKID.

It belongs to the TRAFAC class translation factor GTPase superfamily. Classic translation factor GTPase family. LepA subfamily.

It is found in the cell membrane. The catalysed reaction is GTP + H2O = GDP + phosphate + H(+). Required for accurate and efficient protein synthesis under certain stress conditions. May act as a fidelity factor of the translation reaction, by catalyzing a one-codon backward translocation of tRNAs on improperly translocated ribosomes. Back-translocation proceeds from a post-translocation (POST) complex to a pre-translocation (PRE) complex, thus giving elongation factor G a second chance to translocate the tRNAs correctly. Binds to ribosomes in a GTP-dependent manner. This is Elongation factor 4 from Shouchella clausii (strain KSM-K16) (Alkalihalobacillus clausii).